A 146-amino-acid polypeptide reads, in one-letter code: Large ribosomal subunit protein bL21 (146 aa).

Positions 103–146 are disordered; the sequence is DGKSPTIGPRPKKEKAVEPVEGASDDKPRRAAKKTAAKTAEDAD. Over residues 116 to 131 the composition is skewed to basic and acidic residues; that stretch reads EKAVEPVEGASDDKPR.

This sequence belongs to the bacterial ribosomal protein bL21 family. Part of the 50S ribosomal subunit. Contacts protein L20.

Functionally, this protein binds to 23S rRNA in the presence of protein L20. This chain is Large ribosomal subunit protein bL21, found in Nitrobacter winogradskyi (strain ATCC 25391 / DSM 10237 / CIP 104748 / NCIMB 11846 / Nb-255).